The following is a 245-amino-acid chain: Uracil-DNA glycosylase (245 aa).

Asp-82 functions as the Proton acceptor in the catalytic mechanism.

It belongs to the uracil-DNA glycosylase (UDG) superfamily. UNG family.

It is found in the cytoplasm. The enzyme catalyses Hydrolyzes single-stranded DNA or mismatched double-stranded DNA and polynucleotides, releasing free uracil.. In terms of biological role, excises uracil residues from the DNA which can arise as a result of misincorporation of dUMP residues by DNA polymerase or due to deamination of cytosine. This is Uracil-DNA glycosylase from Deinococcus geothermalis (strain DSM 11300 / CIP 105573 / AG-3a).